The sequence spans 297 residues: uncharacterized protein (297 aa).

Residue glutamate 46 is part of the active site.

This sequence belongs to the PhzF family. Homodimer and homotetramer.

This is an uncharacterized protein from Escherichia coli O157:H7.